A 293-amino-acid chain; its full sequence is ATP phosphoribosyltransferase (293 aa).

The protein belongs to the ATP phosphoribosyltransferase family. Long subfamily. Requires Mg(2+) as cofactor.

It localises to the cytoplasm. It carries out the reaction 1-(5-phospho-beta-D-ribosyl)-ATP + diphosphate = 5-phospho-alpha-D-ribose 1-diphosphate + ATP. It functions in the pathway amino-acid biosynthesis; L-histidine biosynthesis; L-histidine from 5-phospho-alpha-D-ribose 1-diphosphate: step 1/9. With respect to regulation, feedback inhibited by histidine. In terms of biological role, catalyzes the condensation of ATP and 5-phosphoribose 1-diphosphate to form N'-(5'-phosphoribosyl)-ATP (PR-ATP). Has a crucial role in the pathway because the rate of histidine biosynthesis seems to be controlled primarily by regulation of HisG enzymatic activity. This is ATP phosphoribosyltransferase from Nitratidesulfovibrio vulgaris (strain DP4) (Desulfovibrio vulgaris).